The primary structure comprises 457 residues: Bifunctional protein GlmU (457 aa).

Residues 1–230 (MLNVVILAAG…SWETLGVNSR (230 aa)) are pyrophosphorylase. Residues 7-10 (LAAG), Lys-21, Gln-73, 78-79 (GT), 104-106 (YGD), Gly-140, Glu-155, Asn-170, and Asn-228 each bind UDP-N-acetyl-alpha-D-glucosamine. Asp-106 contributes to the Mg(2+) binding site. Asn-228 serves as a coordination point for Mg(2+). The tract at residues 231–251 (VQQAQLERAWQSELARRQLEA) is linker. An N-acetyltransferase region spans residues 252-457 (GVTLADPARF…EGWKRPVKKS (206 aa)). 2 residues coordinate UDP-N-acetyl-alpha-D-glucosamine: Arg-334 and Lys-352. The active-site Proton acceptor is His-364. Residues Tyr-367 and Asn-378 each contribute to the UDP-N-acetyl-alpha-D-glucosamine site. Acetyl-CoA-binding positions include Ala-381, 387 to 388 (NY), Ser-406, Ala-424, and Arg-441.

This sequence in the N-terminal section; belongs to the N-acetylglucosamine-1-phosphate uridyltransferase family. The protein in the C-terminal section; belongs to the transferase hexapeptide repeat family. In terms of assembly, homotrimer. Mg(2+) is required as a cofactor.

The protein localises to the cytoplasm. It carries out the reaction alpha-D-glucosamine 1-phosphate + acetyl-CoA = N-acetyl-alpha-D-glucosamine 1-phosphate + CoA + H(+). The enzyme catalyses N-acetyl-alpha-D-glucosamine 1-phosphate + UTP + H(+) = UDP-N-acetyl-alpha-D-glucosamine + diphosphate. It functions in the pathway nucleotide-sugar biosynthesis; UDP-N-acetyl-alpha-D-glucosamine biosynthesis; N-acetyl-alpha-D-glucosamine 1-phosphate from alpha-D-glucosamine 6-phosphate (route II): step 2/2. It participates in nucleotide-sugar biosynthesis; UDP-N-acetyl-alpha-D-glucosamine biosynthesis; UDP-N-acetyl-alpha-D-glucosamine from N-acetyl-alpha-D-glucosamine 1-phosphate: step 1/1. Its pathway is bacterial outer membrane biogenesis; LPS lipid A biosynthesis. Functionally, catalyzes the last two sequential reactions in the de novo biosynthetic pathway for UDP-N-acetylglucosamine (UDP-GlcNAc). The C-terminal domain catalyzes the transfer of acetyl group from acetyl coenzyme A to glucosamine-1-phosphate (GlcN-1-P) to produce N-acetylglucosamine-1-phosphate (GlcNAc-1-P), which is converted into UDP-GlcNAc by the transfer of uridine 5-monophosphate (from uridine 5-triphosphate), a reaction catalyzed by the N-terminal domain. The chain is Bifunctional protein GlmU from Bordetella bronchiseptica (strain ATCC BAA-588 / NCTC 13252 / RB50) (Alcaligenes bronchisepticus).